Reading from the N-terminus, the 163-residue chain is MPSFDIVSEVDLQEARNGVDNAVREVESRFDFRGVEATIALNDANKTIKVLSESDFQVNQLLDILRAKLLKRGIEGASLDVPDEFVHSSKTWYVEAKLKQGIESAVQKKIVKLIKDSKLKVQAQIQGEEIRVTGKSRDDLQSVMALVRGGDLGQPFQFKNFRD.

It belongs to the YajQ family.

Its function is as follows. Nucleotide-binding protein. This Salmonella paratyphi A (strain ATCC 9150 / SARB42) protein is Nucleotide-binding protein YajQ.